The sequence spans 334 residues: Glyceraldehyde-3-phosphate dehydrogenase (334 aa).

Residues 12–13 (RI), Asp34, and Arg79 contribute to the NAD(+) site. Residues 150-152 (SCT), Thr181, 210-211 (TG), and Arg233 each bind D-glyceraldehyde 3-phosphate. Cys151 functions as the Nucleophile in the catalytic mechanism. Residue Asn315 coordinates NAD(+).

This sequence belongs to the glyceraldehyde-3-phosphate dehydrogenase family. Homotetramer.

The protein localises to the cytoplasm. It carries out the reaction D-glyceraldehyde 3-phosphate + phosphate + NAD(+) = (2R)-3-phospho-glyceroyl phosphate + NADH + H(+). The protein operates within carbohydrate degradation; glycolysis; pyruvate from D-glyceraldehyde 3-phosphate: step 1/5. This chain is Glyceraldehyde-3-phosphate dehydrogenase (GPD), found in Wickerhamomyces ciferrii (strain ATCC 14091 / BCRC 22168 / CBS 111 / JCM 3599 / NBRC 0793 / NRRL Y-1031 F-60-10) (Yeast).